A 326-amino-acid chain; its full sequence is Undecaprenyl-phosphate 4-deoxy-4-formamido-L-arabinose transferase (326 aa).

Transmembrane regions (helical) follow at residues 234-254 (LLSI…ILLI) and 269-289 (VFTL…GMGL).

Belongs to the glycosyltransferase 2 family.

It localises to the cell inner membrane. The catalysed reaction is UDP-4-deoxy-4-formamido-beta-L-arabinose + di-trans,octa-cis-undecaprenyl phosphate = 4-deoxy-4-formamido-alpha-L-arabinopyranosyl di-trans,octa-cis-undecaprenyl phosphate + UDP. It functions in the pathway glycolipid biosynthesis; 4-amino-4-deoxy-alpha-L-arabinose undecaprenyl phosphate biosynthesis; 4-amino-4-deoxy-alpha-L-arabinose undecaprenyl phosphate from UDP-4-deoxy-4-formamido-beta-L-arabinose and undecaprenyl phosphate: step 1/2. The protein operates within bacterial outer membrane biogenesis; lipopolysaccharide biosynthesis. Functionally, catalyzes the transfer of 4-deoxy-4-formamido-L-arabinose from UDP to undecaprenyl phosphate. The modified arabinose is attached to lipid A and is required for resistance to polymyxin and cationic antimicrobial peptides. This Aeromonas hydrophila subsp. hydrophila (strain ATCC 7966 / DSM 30187 / BCRC 13018 / CCUG 14551 / JCM 1027 / KCTC 2358 / NCIMB 9240 / NCTC 8049) protein is Undecaprenyl-phosphate 4-deoxy-4-formamido-L-arabinose transferase.